Consider the following 360-residue polypeptide: UPF0324 membrane protein DVU_0123 (360 aa).

Helical transmembrane passes span 20 to 42 (VTESLPGLLLVCAVALVASFVAP), 57 to 79 (KDFILAIIFGIIIRNTVGVPAVF), 100 to 122 (SYSLAGLVSVGAQALVFIAVFLF), 142 to 164 (AACLAAGMSVCGVSATIAIAPAV), 171 to 193 (MAYSIAVVLMFGLLALIAFPLIG), 203 to 225 (FGAFAGVGIVNSAQVLAAGFGFS), 232 to 254 (AGIYNIGRVVFLPFVVLMLAIMA), 278 to 297 (FPLFVLGFLAIVCLNTAGVL), 310 to 327 (EWAFLLGFASIGLTTRLS), and 337 to 359 (FLFGFGVAGLKAALALAAVLLFM).

It belongs to the UPF0324 family.

The protein localises to the cell membrane. The protein is UPF0324 membrane protein DVU_0123 of Nitratidesulfovibrio vulgaris (strain ATCC 29579 / DSM 644 / CCUG 34227 / NCIMB 8303 / VKM B-1760 / Hildenborough) (Desulfovibrio vulgaris).